A 299-amino-acid polypeptide reads, in one-letter code: Prohibitin-2 (299 aa).

An N-acetylalanine modification is found at A2. Positions 19–49 (MGTALKLLLGAGAVAYGVRESVFTVEGGHRA) are necessary for transcriptional repression. Position 128 is a phosphotyrosine (Y128). N6-acetyllysine is present on K147. Positions 150–174 (ASQLITQRAQVSLLIRRELTERAKD) are necessary for transcriptional repression. Position 151 is a phosphoserine (S151). The stretch at 190–238 (SREYTAAVEAKQVAQQEAQRAQFLVEKAKQEQRQKIVQAEGEAEAAKML) forms a coiled coil. K200, K236, K250, and K262 each carry N6-acetyllysine.

The protein belongs to the prohibitin family. The mitochondrial prohibitin complex consists of two subunits (PHB1 and PHB2), assembled into a membrane-associated ring-shaped supercomplex of approximately 1 mDa. Interacts with ESR1, HDAC1 and HDAC5. Interacts with ZNF703. Interacts with STOML2. Interacts with ARFGEF3. Interacts with SPHK2. Interacts with COX4I1; the interaction associates PHB2 with COX. Interacts with MAP1LC3B (membrane-bound form LC3-II); the interaction is direct and upon mitochondrial depolarization and proteasome-dependent outer membrane rupture. Interacts with IGFBP6 (via C-terminal domain). Interacts with CLPB. Interacts with CD86 (via cytoplasmic domain); the interactions increases after priming with CD40. Interacts with AFG3L2. Interacts with DNAJC19. Interacts with AKT2; this interaction may be important for myogenic differentiation. In terms of processing, phosphorylated. Tyrosine phosphorylation is indirectly stimulated by IGFBP6.

The protein localises to the mitochondrion inner membrane. The protein resides in the cytoplasm. It localises to the nucleus. Its subcellular location is the cell membrane. Its function is as follows. Protein with pleiotropic attributes mediated in a cell-compartment- and tissue-specific manner, which include the plasma membrane-associated cell signaling functions, mitochondrial chaperone, and transcriptional co-regulator of transcription factors and sex steroid hormones in the nucleus. In terms of biological role, in the mitochondria, together with PHB, forms large ring complexes (prohibitin complexes) in the inner mitochondrial membrane (IMM) and functions as a chaperone protein that stabilizes mitochondrial respiratory enzymes and maintains mitochondrial integrity in the IMM, which is required for mitochondrial morphogenesis, neuronal survival, and normal lifespan. The prohibitin complex, with DNAJC19, regulates cardiolipin remodeling and the protein turnover of OMA1 in a cardiolipin-binding manner. Also regulates cytochrome-c oxidase assembly (COX) and mitochondrial respiration. Binding to sphingoid 1-phosphate (SPP) modulates its regulator activity. Has a key role of mitophagy receptor involved in targeting mitochondria for autophagic degradation. Involved in mitochondrial-mediated antiviral innate immunity, activates RIG-I-mediated signal transduction and production of IFNB1 and pro-inflammatory cytokine IL6. Functionally, in the nucleus, serves as transcriptional co-regulator. Acts as a mediator of transcriptional repression by nuclear hormone receptors via recruitment of histone deacetylases. Functions as an estrogen receptor (ER)-selective coregulator that potentiates the inhibitory activities of antiestrogens and represses the activity of estrogens. Competes with NCOA1 for modulation of ER transcriptional activity. In the plasma membrane, is involved in IGFBP6-induced cell migration. Cooperates with CD86 to mediate CD86-signaling in B lymphocytes that regulates the level of IgG1 produced through the activation of distal signaling intermediates. Upon CD40 engagement, required to activate NF-kappa-B signaling pathway via phospholipase C and protein kinase C activation. This is Prohibitin-2 from Rattus norvegicus (Rat).